The chain runs to 616 residues: Glucoamylase P (616 aa).

The N-terminal stretch at 1-29 (MRLLPSSCAGALSLLCSLAIAAPTELKAR) is a signal peptide. Position 149 (tryptophan 149) interacts with substrate. N-linked (GlcNAc...) asparagine glycosylation occurs at asparagine 200. Aspartate 205 (proton acceptor) is an active-site residue. The active-site Proton donor is glutamate 208. N-linked (GlcNAc...) asparagine glycosylation occurs at asparagine 427. Positions 501–608 (VTSSCQVSIT…AVTTDDAWMG (108 aa)) constitute a CBM20 domain.

The protein belongs to the glycosyl hydrolase 15 family.

Its subcellular location is the secreted. The enzyme catalyses Hydrolysis of terminal (1-&gt;4)-linked alpha-D-glucose residues successively from non-reducing ends of the chains with release of beta-D-glucose.. This chain is Glucoamylase P (GAMP), found in Amorphotheca resinae (Creosote fungus).